The following is a 229-amino-acid chain: 2,3-bisphosphoglycerate-dependent phosphoglycerate mutase (229 aa).

Residues 7–14 (RHGQSEWN), 20–21 (TG), R59, 86–89 (ERHY), K97, 113–114 (RR), and 182–183 (GN) each bind substrate. H8 (tele-phosphohistidine intermediate) is an active-site residue. The Proton donor/acceptor role is filled by E86.

The protein belongs to the phosphoglycerate mutase family. BPG-dependent PGAM subfamily.

The enzyme catalyses (2R)-2-phosphoglycerate = (2R)-3-phosphoglycerate. Its pathway is carbohydrate degradation; glycolysis; pyruvate from D-glyceraldehyde 3-phosphate: step 3/5. In terms of biological role, catalyzes the interconversion of 2-phosphoglycerate and 3-phosphoglycerate. This Listeria welshimeri serovar 6b (strain ATCC 35897 / DSM 20650 / CCUG 15529 / CIP 8149 / NCTC 11857 / SLCC 5334 / V8) protein is 2,3-bisphosphoglycerate-dependent phosphoglycerate mutase.